A 288-amino-acid polypeptide reads, in one-letter code: MTTERPDAGDSGSEKPDETAAPDPAANGARRSKTRLAARSLGHGFGDGAVLEDISLAVEPGEILAVVGPSGTGKTTLFRLLAMFERPDEGTVEVGGDDVWDLPEARRLAVRRRVGMAFQTRSLFSTTVEENVSYGLRVRRSWSARVRDAVEGLFGRDEPSETVRDALRTVGMFDKVGRDAGSLSAGEAQRVAIARALAPDPDVLLLDEPTSNLDPRNTAAIESAMRAARDRGIAVALATHDMQQARRVSDRTAVILGGTCIESGPTDAVFESPDDDRVRQFVEGKLVY.

Residues 1 to 18 (MTTERPDAGDSGSEKPDE) are compositionally biased toward basic and acidic residues. Residues 1–33 (MTTERPDAGDSGSEKPDETAAPDPAANGARRSK) form a disordered region. An ABC transporter domain is found at 36 to 282 (LAARSLGHGF…PDDDRVRQFV (247 aa)). Residue 68–75 (GPSGTGKT) participates in ATP binding.

Belongs to the ABC transporter superfamily. The complex is composed of two ATP-binding proteins (HVO_1886), two transmembrane proteins (HVO_1887) and a solute-binding protein (HVO_1888).

The protein resides in the cell membrane. Its function is as follows. Part of an ABC transporter complex involved in anions import. Responsible for energy coupling to the transport system. The polypeptide is Probable anion import ATP-binding protein HVO_1886 (Haloferax volcanii (strain ATCC 29605 / DSM 3757 / JCM 8879 / NBRC 14742 / NCIMB 2012 / VKM B-1768 / DS2) (Halobacterium volcanii)).